Reading from the N-terminus, the 431-residue chain is Enolase (431 aa).

Position 162 (Gln-162) interacts with (2R)-2-phosphoglycerate. Glu-204 acts as the Proton donor in catalysis. 3 residues coordinate Mg(2+): Asp-241, Glu-284, and Asp-311. The (2R)-2-phosphoglycerate site is built by Lys-336, Arg-365, Ser-366, and Lys-387. The active-site Proton acceptor is Lys-336.

Belongs to the enolase family. It depends on Mg(2+) as a cofactor.

The protein resides in the cytoplasm. It localises to the secreted. Its subcellular location is the cell surface. It carries out the reaction (2R)-2-phosphoglycerate = phosphoenolpyruvate + H2O. It functions in the pathway carbohydrate degradation; glycolysis; pyruvate from D-glyceraldehyde 3-phosphate: step 4/5. In terms of biological role, catalyzes the reversible conversion of 2-phosphoglycerate (2-PG) into phosphoenolpyruvate (PEP). It is essential for the degradation of carbohydrates via glycolysis. This chain is Enolase, found in Sorangium cellulosum (strain So ce56) (Polyangium cellulosum (strain So ce56)).